Consider the following 431-residue polypeptide: Magnetosome protein MamH (431 aa).

Transmembrane regions (helical) follow at residues 21-41, 57-77, 86-106, 107-127, 156-176, 178-198, 243-263, 274-294, 302-321, 358-378, and 380-400; these read LLSALCMVFMTLVVAIQPLFL, ANVQVVTEVLDLFIFAYLGYL, IIVAGFLVAAIGAVIAPLSPW, IGGASIGALVVYYVSRVIMSA, TAFMMAFGVTLVYAVLMQIPA, AGIAVTMLLTAAVSLAGAWLA, MVFVGLFLMLWFIYFADLIKV, ILIGLMGAVVMLSIPVWRSFI, AVLLGMVLSALGFIMLGFII, LLGSVLGAFNVIGCIGIIFFV, and VGGFLFDYVGPPAPFVFTGVG.

It belongs to the major facilitator superfamily.

The protein localises to the magnetosome membrane. In terms of biological role, required for correct biomineralization of the magnetosome; probably transports some form of iron. Partially functionally redundant with MamZ. This is Magnetosome protein MamH (mamH) from Paramagnetospirillum magneticum (strain ATCC 700264 / AMB-1) (Magnetospirillum magneticum).